A 138-amino-acid polypeptide reads, in one-letter code: Basic phospholipase A2 sistruxin B (138 aa).

A signal peptide spans 1–16 (MRALWIVAVLLVGVEG). Disulfide bonds link Cys-42–Cys-131, Cys-44–Cys-60, Cys-59–Cys-111, Cys-65–Cys-138, Cys-66–Cys-104, Cys-73–Cys-97, and Cys-91–Cys-102. The Ca(2+) site is built by Tyr-43, Gly-45, and Gly-47. The active site involves His-63. Asp-64 serves as a coordination point for Ca(2+). Asp-105 is a catalytic residue.

As to quaternary structure, heterodimer of an acidic subunit and a basic chain. The acidic subunit is non-toxic, without enzymatic activity and comprises 3 peptides that are cross-linked by 7 disulfide bridges. The basic subunit is toxic, has phospholipase A2 activity and is composed of a single chain. Requires Ca(2+) as cofactor. As to expression, expressed by the venom gland.

It is found in the secreted. The catalysed reaction is a 1,2-diacyl-sn-glycero-3-phosphocholine + H2O = a 1-acyl-sn-glycero-3-phosphocholine + a fatty acid + H(+). Functionally, snake venom phospholipase A2 (PLA2) that shows presynaptic neurotoxicity. PLA2 catalyzes the calcium-dependent hydrolysis of the 2-acyl groups in 3-sn-phosphoglycerides. The polypeptide is Basic phospholipase A2 sistruxin B (Sistrurus tergeminus (Western massasauga)).